The chain runs to 955 residues: MPFALGQRWISDTETDLGLGTVVAVEGRMVTLLFPATGENRMYAKEEAPVTRVSFNVGDQIASHEDWTMTVEEVQEKDGLLIYVGVRTDNDEPVALKEVFLNNFIKFNKPQDRLFAGQIDRMSRFTLRYEALINQHQRRRNPTRGLAGGRVSLIPHQLYIAHEVGHRYAPRVLLADEVGLGKTIEAGMIIHQQLLSGRAHRVLILLPETLQHQWLVEMLRRFNLHFSLFDEERCIEAFADAENPFETEQLVICSLDFLRKKRRRFEQVLEAEWDLLVVDEAHHLEWSEEAPSRAYEMVEALAEQVPGVLLLTATPDQLGHQSHFARLRLLDPERFYDYDAFLAEEQAYGQVASAAQELLDGETLSDEAKRILASQLEGLDLSDAAARQQAVAKLLDQHGTGRVLFRNSRANIQGFPERHLNVYPMPLPEQYKTAIKVMGMMGGNGGDLQTRALRYLYPEKIFQQFEGDNATWTQFDPRVEWLLELLLSARQQKVLVICSEAATAIALEEALRTREGIRGAVFHEGMSILERDKASAYFAQQEGGAQVLLCSEIGSEGRNFQFASHLVLFDLPLNPDLLEQRIGRLDRIGQQNTVEIHVPYLEGTSQRALQLWYHDGLDAFEQTCPTARPVFEAVRDELFELLAANTGDQAPLDALLVKTRELHEPLKARLEQGRDRLLEIHSSGGAAAQQLVDKLAAEDDDTGMISFALKMFDEIGVNQDDRGENALVLTPGDHMLVSSFPGLPQDGMTITFDRNTALSRDDMALLSWDHPMMRGGIDLILGSEIGATSVALLKNKALPIGSILLELIFVAESAAHPQLYRFMPPTPIRLLMDKNGQNLGEKVAFDAFNRQLTPVNRHLGSKLVTASQPVIHGLIGKGQAIAEELKGGIVDKARAQMAQTLQQDLDRLEALKAVNPNVRDSELDYLRNLQAELHHLIDQTQLKLDAIRFIVVTHN.

The 171-residue stretch at 163 to 333 (EVGHRYAPRV…FARLRLLDPE (171 aa)) folds into the Helicase ATP-binding domain. 176–183 (DEVGLGKT) is a binding site for ATP. Residues 279 to 282 (DEAH) carry the DEAH box motif. One can recognise a Helicase C-terminal domain in the interval 478-642 (RVEWLLELLL…AVRDELFELL (165 aa)).

This sequence belongs to the SNF2/RAD54 helicase family. RapA subfamily. As to quaternary structure, interacts with the RNAP. Has a higher affinity for the core RNAP than for the holoenzyme. Its ATPase activity is stimulated by binding to RNAP.

Functionally, transcription regulator that activates transcription by stimulating RNA polymerase (RNAP) recycling in case of stress conditions such as supercoiled DNA or high salt concentrations. Probably acts by releasing the RNAP, when it is trapped or immobilized on tightly supercoiled DNA. Does not activate transcription on linear DNA. Probably not involved in DNA repair. The protein is RNA polymerase-associated protein RapA of Aeromonas hydrophila subsp. hydrophila (strain ATCC 7966 / DSM 30187 / BCRC 13018 / CCUG 14551 / JCM 1027 / KCTC 2358 / NCIMB 9240 / NCTC 8049).